Reading from the N-terminus, the 96-residue chain is Protein RnfH (96 aa).

Belongs to the UPF0125 (RnfH) family.

The polypeptide is Protein RnfH (Escherichia fergusonii (strain ATCC 35469 / DSM 13698 / CCUG 18766 / IAM 14443 / JCM 21226 / LMG 7866 / NBRC 102419 / NCTC 12128 / CDC 0568-73)).